The following is a 350-amino-acid chain: Anthranilate phosphoribosyltransferase (350 aa).

5-phospho-alpha-D-ribose 1-diphosphate contacts are provided by residues Gly93, 96 to 97 (GD), Thr101, 103 to 106 (NIST), 121 to 129 (KHGNRSASG), and Ser133. Gly93 provides a ligand contact to anthranilate. Position 105 (Ser105) interacts with Mg(2+). Asn124 is a binding site for anthranilate. Anthranilate is bound at residue Arg179. Positions 238 and 239 each coordinate Mg(2+).

It belongs to the anthranilate phosphoribosyltransferase family. Homodimer. It depends on Mg(2+) as a cofactor.

It catalyses the reaction N-(5-phospho-beta-D-ribosyl)anthranilate + diphosphate = 5-phospho-alpha-D-ribose 1-diphosphate + anthranilate. The protein operates within amino-acid biosynthesis; L-tryptophan biosynthesis; L-tryptophan from chorismate: step 2/5. Functionally, catalyzes the transfer of the phosphoribosyl group of 5-phosphorylribose-1-pyrophosphate (PRPP) to anthranilate to yield N-(5'-phosphoribosyl)-anthranilate (PRA). This is Anthranilate phosphoribosyltransferase from Parasynechococcus marenigrum (strain WH8102).